Consider the following 582-residue polypeptide: ABC transporter-like protein ECU11_1340 (582 aa).

An ABC transporter domain is found at 15 to 257 (VPNQNLSSNE…LGTKGIHNDG (243 aa)). 47 to 54 (GTSGSGKT) lines the ATP pocket. The ABC transmembrane type-2 domain maps to 316–519 (YVSFQMAIRQ…EIDAFISNFF (204 aa)). Helical transmembrane passes span 335–355 (ILYSLAMPIAMALFLVTGKYI), 359–378 (FSIATIKASMLSLSLYYVMN), 412–432 (TLVSILKYCIFFGIIYAFGLI), 436–456 (HAFLGQVLMYTLGGTVSSMLF), 482–502 (GALLGAGALLGALTLWISVIP), and 551–571 (SFLRILFLMFHPFAFFHSSIL).

The protein belongs to the ABC transporter superfamily.

The protein resides in the membrane. The chain is ABC transporter-like protein ECU11_1340 from Encephalitozoon cuniculi (strain GB-M1) (Microsporidian parasite).